We begin with the raw amino-acid sequence, 284 residues long: MLRVAVPNKGTLSEPATEILAEAGYRRRTDSKDLTVIDPVNQVEFFFLRPKDIAIYVGSGELDFGITGRDLVGDSDAPVRERLALGFGSSSFRYAGPAGRDWKIADLAGKRIATAYPNLVRKDLAERGIEATVIRLDGAVEISVQLGVADAIADVVGSGRTLSLHNLVAFGEPLCDSEAVLIESDRGGQDDTQAARDQLVARIQGVVFGQQYLMLDYDCPRAVLDKATAITPGLESPTIAPLADADWVAIRALVPRRGVNEIMDELAAIGAKAILASDIRFCRF.

It belongs to the ATP phosphoribosyltransferase family. Long subfamily. In terms of assembly, equilibrium between an active dimeric form, an inactive hexameric form and higher aggregates. Interconversion between the various forms is largely reversible and is influenced by the natural substrates and inhibitors of the enzyme. Mg(2+) is required as a cofactor.

The protein resides in the cytoplasm. It carries out the reaction 1-(5-phospho-beta-D-ribosyl)-ATP + diphosphate = 5-phospho-alpha-D-ribose 1-diphosphate + ATP. It functions in the pathway amino-acid biosynthesis; L-histidine biosynthesis; L-histidine from 5-phospho-alpha-D-ribose 1-diphosphate: step 1/9. Its activity is regulated as follows. Feedback inhibited by histidine. Its function is as follows. Catalyzes the condensation of ATP and 5-phosphoribose 1-diphosphate to form N'-(5'-phosphoribosyl)-ATP (PR-ATP). Has a crucial role in the pathway because the rate of histidine biosynthesis seems to be controlled primarily by regulation of HisG enzymatic activity. This chain is ATP phosphoribosyltransferase, found in Mycobacterium avium (strain 104).